The sequence spans 359 residues: DNA polymerase IV (359 aa).

Positions 7–188 (IIHIDMDAFY…IPIGKFFGVG (182 aa)) constitute a UmuC domain. Mg(2+) is bound by residues aspartate 11 and aspartate 106. The active site involves glutamate 107.

Belongs to the DNA polymerase type-Y family. As to quaternary structure, monomer. Requires Mg(2+) as cofactor.

It localises to the cytoplasm. The enzyme catalyses DNA(n) + a 2'-deoxyribonucleoside 5'-triphosphate = DNA(n+1) + diphosphate. In terms of biological role, poorly processive, error-prone DNA polymerase involved in untargeted mutagenesis. Copies undamaged DNA at stalled replication forks, which arise in vivo from mismatched or misaligned primer ends. These misaligned primers can be extended by PolIV. Exhibits no 3'-5' exonuclease (proofreading) activity. May be involved in translesional synthesis, in conjunction with the beta clamp from PolIII. This chain is DNA polymerase IV, found in Clostridium perfringens (strain ATCC 13124 / DSM 756 / JCM 1290 / NCIMB 6125 / NCTC 8237 / Type A).